We begin with the raw amino-acid sequence, 335 residues long: Fructose-1,6-bisphosphatase class 1 (335 aa).

Positions 92, 114, 116, and 117 each coordinate Mg(2+). Substrate-binding positions include 117 to 120 (DGSS), Asn209, and Lys275. Glu281 is a Mg(2+) binding site.

It belongs to the FBPase class 1 family. As to quaternary structure, homotetramer. The cofactor is Mg(2+).

The protein resides in the cytoplasm. The enzyme catalyses beta-D-fructose 1,6-bisphosphate + H2O = beta-D-fructose 6-phosphate + phosphate. It participates in carbohydrate biosynthesis; gluconeogenesis. The polypeptide is Fructose-1,6-bisphosphatase class 1 (Delftia acidovorans (strain DSM 14801 / SPH-1)).